Consider the following 69-residue polypeptide: DNA gyrase inhibitor YacG (69 aa).

4 residues coordinate Zn(2+): C7, C10, C26, and C30.

The protein belongs to the DNA gyrase inhibitor YacG family. Interacts with GyrB. Zn(2+) is required as a cofactor.

Inhibits all the catalytic activities of DNA gyrase by preventing its interaction with DNA. Acts by binding directly to the C-terminal domain of GyrB, which probably disrupts DNA binding by the gyrase. In Shewanella putrefaciens (strain CN-32 / ATCC BAA-453), this protein is DNA gyrase inhibitor YacG.